A 473-amino-acid chain; its full sequence is Putative malate dehydrogenase 1B (473 aa).

Belongs to the LDH/MDH superfamily. MDH type 2 family.

The protein is Putative malate dehydrogenase 1B (MDH1B) of Bos taurus (Bovine).